The primary structure comprises 112 residues: Larval cuticle protein III/IV (112 aa).

Positions 1 to 16 are cleaved as a signal peptide; sequence MFKILLVCALAALVAA. The Chitin-binding type R&amp;R domain occupies 31–92; the sequence is PDGFKTVVSL…PSSDLLPVAP (62 aa).

Functionally, component of the larval cuticle. The protein is Larval cuticle protein III/IV (Lcp3) of Drosophila miranda (Fruit fly).